A 222-amino-acid polypeptide reads, in one-letter code: Nucleoside triphosphate pyrophosphatase (222 aa).

Residue Asp-82 is the Proton acceptor of the active site.

The protein belongs to the Maf family. A divalent metal cation is required as a cofactor.

The protein resides in the cytoplasm. It catalyses the reaction a ribonucleoside 5'-triphosphate + H2O = a ribonucleoside 5'-phosphate + diphosphate + H(+). The enzyme catalyses a 2'-deoxyribonucleoside 5'-triphosphate + H2O = a 2'-deoxyribonucleoside 5'-phosphate + diphosphate + H(+). Nucleoside triphosphate pyrophosphatase. May have a dual role in cell division arrest and in preventing the incorporation of modified nucleotides into cellular nucleic acids. This chain is Nucleoside triphosphate pyrophosphatase, found in Mycobacterium tuberculosis (strain ATCC 25177 / H37Ra).